Here is a 638-residue protein sequence, read N- to C-terminus: Threonine--tRNA ligase (638 aa).

The 61-residue stretch at 1–61 (MPVITLPDGS…EHDARIEIVT (61 aa)) folds into the TGS domain. A catalytic region spans residues 243-534 (DHRKIAKAQD…LIEEYAGHFP (292 aa)). Residues cysteine 334, histidine 385, and histidine 511 each coordinate Zn(2+).

This sequence belongs to the class-II aminoacyl-tRNA synthetase family. As to quaternary structure, homodimer. The cofactor is Zn(2+).

Its subcellular location is the cytoplasm. The catalysed reaction is tRNA(Thr) + L-threonine + ATP = L-threonyl-tRNA(Thr) + AMP + diphosphate + H(+). Catalyzes the attachment of threonine to tRNA(Thr) in a two-step reaction: L-threonine is first activated by ATP to form Thr-AMP and then transferred to the acceptor end of tRNA(Thr). Also edits incorrectly charged L-seryl-tRNA(Thr). The sequence is that of Threonine--tRNA ligase from Idiomarina loihiensis (strain ATCC BAA-735 / DSM 15497 / L2-TR).